The chain runs to 35 residues: Peptide Hact-3 (35 aa).

In terms of tissue distribution, expressed in tentacles.

It is found in the nematocyst. It localises to the secreted. In terms of biological role, peptide with unknown function. Does not exhibit antimicrobial activity against Escherichia coli and Staphylococcus aureus. The chain is Peptide Hact-3 from Heliofungia actiniformis (Mushroom coral).